The chain runs to 205 residues: MGGKWSKSSVVGWPAVRERMRRAEPAADGVGAVSRDLEKHGAITSSNTAATNADCAWLEAQEEEEVGFPVTPQVPLRPMTYKAAVDLSHFLKEKGGLEGLIHSQRRQDILDLWIHHTQGYFPDWQNYTPGPGVRYPLTFGWCYKLVPVEPEKEEANKGENTSLLHPVSLHGMDDPEREVLEWRFDSRLAFHHMARELHPEYFKNC.

Residue Gly2 is the site of N-myristoyl glycine; by host attachment. Ser6 is subject to Phosphoserine; by host. The acidic; interacts with host PACS1 and PACS2; stabilizes the interaction of NEF/MHC-I with host AP1M1; necessary for MHC-I internalization stretch occupies residues 62–65; it reads EEEE. An SH3-binding; interaction with Src family tyrosine kinases region spans residues 69–78; sequence PVTPQVPLRP. The PxxP; stabilizes the interaction of NEF/MHC-I with host AP1M1; necessary for MHC-I internalization motif lies at 72–75; that stretch reads PQVP. The mediates dimerization, Nef-PTE1 interaction stretch occupies residues 108–124; that stretch reads DILDLWIHHTQGYFPDW. The tract at residues 148 to 179 is binding to ATP6V1H; that stretch reads VEPEKEEANKGENTSLLHPVSLHGMDDPEREV. The Dileucine internalization motif; necessary for CD4 internalization signature appears at 163–164; that stretch reads LL. A Diacidic; necessary for CD4 internalization motif is present at residues 173–174; that stretch reads DD.

The protein belongs to the lentivirus primate group Nef protein family. Monomer; cytosolic form. Homodimer; membrane bound form. Interacts with Nef associated p21-activated kinase (PAK2); this interaction activates PAK2. Associates with the Nef-MHC-I-AP1 complex; this complex is required for MHC-I internalization. Interacts (via C-terminus) with host PI3-kinase. Interacts with host PACS1; this interaction seems to be weak. Interacts with host PACS2. Interacts with host LCK and MAPK3; these interactions inhibit the kinase activity of the latter. Interacts with host ATP6V1H; this interaction may play a role in CD4 endocytosis. Associates with the CD4-Nef-AP2 complex; this complex is required for CD4 internalization. Interacts with host AP2 subunit alpha and AP2 subunit sigma2. Interacts with TCR-zeta chain; this interaction up-regulates the Fas ligand (FasL) surface expression. Interacts with host HCK, LYN, and SRC; these interactions activate the Src family kinases. Interacts with MAP3K5; this interaction inhibits the Fas and TNFR-mediated death signals. Interacts with beta-COP and PTE1. Interacts with human RACK1; this increases Nef phosphorylation by PKC. Interacts with TP53; this interaction decreases the half-life of TP53, protecting the infected cell against p53-mediated apoptosis. Post-translationally, the virion-associated Nef proteins are cleaved by the viral protease to release the soluble C-terminal core protein. Nef is probably cleaved concomitantly with viral structural proteins on maturation of virus particles. Myristoylated. In terms of processing, phosphorylated on serine residues, probably by host PKCdelta and theta.

Its subcellular location is the host cell membrane. It localises to the virion. The protein localises to the secreted. The protein resides in the host Golgi apparatus membrane. Its function is as follows. Factor of infectivity and pathogenicity, required for optimal virus replication. Alters numerous pathways of T-lymphocyte function and down-regulates immunity surface molecules in order to evade host defense and increase viral infectivity. Alters the functionality of other immunity cells, like dendritic cells, monocytes/macrophages and NK cells. In infected CD4(+) T-lymphocytes, down-regulates the surface MHC-I, mature MHC-II, CD4, CD28, CCR5 and CXCR4 molecules. Mediates internalization and degradation of host CD4 through the interaction of with the cytoplasmic tail of CD4, the recruitment of AP-2 (clathrin adapter protein complex 2), internalization through clathrin coated pits, and subsequent transport to endosomes and lysosomes for degradation. Diverts host MHC-I molecules to the trans-Golgi network-associated endosomal compartments by an endocytic pathway to finally target them for degradation. MHC-I down-regulation may involve AP-1 (clathrin adapter protein complex 1) or possibly Src family kinase-ZAP70/Syk-PI3K cascade recruited by PACS2. In consequence infected cells are masked for immune recognition by cytotoxic T-lymphocytes. Decreasing the number of immune receptors also prevents reinfection by more HIV particles (superinfection). Down-regulates host SERINC3 and SERINC5 thereby excluding these proteins from the viral particles. Virion infectivity is drastically higher when SERINC3 or SERINC5 are excluded from the viral envelope, because these host antiviral proteins impair the membrane fusion event necessary for subsequent virion penetration. Functionally, bypasses host T-cell signaling by inducing a transcriptional program nearly identical to that of anti-CD3 cell activation. Interaction with TCR-zeta chain up-regulates the Fas ligand (FasL). Increasing surface FasL molecules and decreasing surface MHC-I molecules on infected CD4(+) cells send attacking cytotoxic CD8+ T-lymphocytes into apoptosis. In terms of biological role, plays a role in optimizing the host cell environment for viral replication without causing cell death by apoptosis. Protects the infected cells from apoptosis in order to keep them alive until the next virus generation is ready to strike. Inhibits the Fas and TNFR-mediated death signals by blocking MAP3K5/ASK1. Decreases the half-life of TP53, protecting the infected cell against p53-mediated apoptosis. Inhibits the apoptotic signals regulated by the Bcl-2 family proteins through the formation of a Nef/PI3-kinase/PAK2 complex that leads to activation of PAK2 and induces phosphorylation of host BAD. Its function is as follows. Extracellular Nef protein targets CD4(+) T-lymphocytes for apoptosis by interacting with CXCR4 surface receptors. In Homo sapiens (Human), this protein is Protein Nef.